A 474-amino-acid chain; its full sequence is tRNA-2-methylthio-N(6)-dimethylallyladenosine synthase (474 aa).

The MTTase N-terminal domain occupies 3–120 (KKLHIKTWGC…LPEMINHVNG (118 aa)). The [4Fe-4S] cluster site is built by Cys-12, Cys-49, Cys-83, Cys-157, Cys-161, and Cys-164. Positions 143 to 375 (RAEGPTAFVS…QERITQQAMQ (233 aa)) constitute a Radical SAM core domain. Residues 378 to 441 (RRMKGKVQRI…PNSLRGVLLR (64 aa)) form the TRAM domain.

It belongs to the methylthiotransferase family. MiaB subfamily. As to quaternary structure, monomer. [4Fe-4S] cluster is required as a cofactor.

Its subcellular location is the cytoplasm. It carries out the reaction N(6)-dimethylallyladenosine(37) in tRNA + (sulfur carrier)-SH + AH2 + 2 S-adenosyl-L-methionine = 2-methylsulfanyl-N(6)-dimethylallyladenosine(37) in tRNA + (sulfur carrier)-H + 5'-deoxyadenosine + L-methionine + A + S-adenosyl-L-homocysteine + 2 H(+). In terms of biological role, catalyzes the methylthiolation of N6-(dimethylallyl)adenosine (i(6)A), leading to the formation of 2-methylthio-N6-(dimethylallyl)adenosine (ms(2)i(6)A) at position 37 in tRNAs that read codons beginning with uridine. The protein is tRNA-2-methylthio-N(6)-dimethylallyladenosine synthase of Sodalis glossinidius (strain morsitans).